The sequence spans 366 residues: MREETPEQPAPLRSGYTTGSCATATSLAAARLLLGGTTSDAVRIVLPKGQQVPMRLEFCRAWENGAEAGTLKDAGDDPDVTHGALVFARVRLSAAPGVRFHAGPGVGTVTRPGLTLAVGEPAINPVPRQMMERHLTQLAAEHGYTGGFEVTIGIEGGEALALKTMNPRLGILGGLSILGTSGIVRPFSCSAYIASIHQGIDVARANGVRHIAACTGNASEDAMRRRYALPEIALIEMGDFAGAVLKHLRKAPVEKLSLCGGFGKISKLAGGHLDLHSRHSSIDLPQLAGWAAALGASAALQQSMRAANTSQQALAQAHAEGVALGDAVCAHALRFARSIVPAEVRLEVFAIDRQGNLVGQAGEERS.

The protein belongs to the CbiD family.

It catalyses the reaction Co-precorrin-5B + S-adenosyl-L-methionine = Co-precorrin-6A + S-adenosyl-L-homocysteine. It participates in cofactor biosynthesis; adenosylcobalamin biosynthesis; cob(II)yrinate a,c-diamide from sirohydrochlorin (anaerobic route): step 6/10. Functionally, catalyzes the methylation of C-1 in cobalt-precorrin-5B to form cobalt-precorrin-6A. The chain is Cobalt-precorrin-5B C(1)-methyltransferase from Pseudomonas paraeruginosa (strain DSM 24068 / PA7) (Pseudomonas aeruginosa (strain PA7)).